The primary structure comprises 1036 residues: Lethal(2) giant larvae protein homolog 1 (1036 aa).

WD repeat units follow at residues 38–71 (SALAFDPELRIMAIGTRSGAVKIYGAPGVEFTGL), 78–119 (VTQM…GLSF), 139–175 (VTVVLLVAGNTAALGTESGSIFFLDVATLALLEGQTL), 199–233 (SLQGHLQDPSKILIGYSRGLLVIWSQATQSVDNVF), 239–271 (LESLCWGRDGSSIISSHSDGSYAIWSTDTGSPP), 289–331 (AINK…ETLV), 339–373 (VIDFFTVHSTQPEDECDNPQALAVLLEEELVVLDL), 395–473 (TCSA…YKLS), 517–592 (QKVA…RMLI), and 601–662 (TAVT…LRQS). S662 is modified (phosphoserine). Positions 667-677 (RKSRVSGKKRT) are enriched in basic residues. The interval 667–688 (RKSRVSGKKRTPAASSKLQEAN) is disordered. Over residues 679-688 (AASSKLQEAN) the composition is skewed to polar residues. WD repeat units follow at residues 722–782 (VRCL…KEVQ), 791–843 (AIAV…VSAK), 848–901 (LTAH…VHYS), and 915–938 (VFTRHGQGFYLISPSEFERFSLSA). T957 is subject to Phosphothreonine. Residues S964, S982, and S989 each carry the phosphoserine modification. The segment at 980–1002 (PESCEGSPSSAHSKRADTMEPPE) is disordered.

It belongs to the WD repeat L(2)GL family. As to quaternary structure, associated with nonmuscle myosin II heavy chain. Interacts with PRKCI/aPKC, PARD6B/Par-6 and PARD6A. Interacts with STX4A. Interacts with RAB10 (GDP-bound form); the interaction is direct and promotes RAB10 association with membranes and activation through competition with the Rab inhibitor GDI1. Interacts with DCAF1. Phosphorylated by PRKCI on at least one of the following Ser residues: Ser 654, Ser-658, Ser-662, Ser-669 and Ser-672. Phosphorylation is important for appropriated cell polarization.

It localises to the early endosome membrane. Its subcellular location is the golgi apparatus. The protein resides in the trans-Golgi network membrane. It is found in the golgi apparatus membrane. The protein localises to the cell projection. It localises to the axon. Its subcellular location is the cytoplasm. The protein resides in the cytoskeleton. In terms of biological role, cortical cytoskeleton protein found in a complex involved in maintaining cell polarity and epithelial integrity. Involved in the regulation of mitotic spindle orientation, proliferation, differentiation and tissue organization of neuroepithelial cells. Involved in axonogenesis through RAB10 activation thereby regulating vesicular membrane trafficking toward the axonal plasma membrane. This chain is Lethal(2) giant larvae protein homolog 1 (Llgl1), found in Mus musculus (Mouse).